The chain runs to 86 residues: Large ribosomal subunit protein bL27 (86 aa).

A disordered region spans residues 1-24; it reads MATKKAGGSSRNGRDSAGRRLGVK.

The protein belongs to the bacterial ribosomal protein bL27 family.

The sequence is that of Large ribosomal subunit protein bL27 from Rickettsia conorii (strain ATCC VR-613 / Malish 7).